A 418-amino-acid chain; its full sequence is Phosphopentomutase (418 aa).

Residues aspartate 10, aspartate 297, histidine 302, aspartate 338, histidine 339, and histidine 350 each coordinate Mn(2+).

It belongs to the phosphopentomutase family. It depends on Mn(2+) as a cofactor.

Its subcellular location is the cytoplasm. It carries out the reaction 2-deoxy-alpha-D-ribose 1-phosphate = 2-deoxy-D-ribose 5-phosphate. It catalyses the reaction alpha-D-ribose 1-phosphate = D-ribose 5-phosphate. It functions in the pathway carbohydrate degradation; 2-deoxy-D-ribose 1-phosphate degradation; D-glyceraldehyde 3-phosphate and acetaldehyde from 2-deoxy-alpha-D-ribose 1-phosphate: step 1/2. Functionally, isomerase that catalyzes the conversion of deoxy-ribose 1-phosphate (dRib-1-P) and ribose 1-phosphate (Rib-1-P) to deoxy-ribose 5-phosphate (dRib-5-P) and ribose 5-phosphate (Rib-5-P), respectively. This Chromohalobacter salexigens (strain ATCC BAA-138 / DSM 3043 / CIP 106854 / NCIMB 13768 / 1H11) protein is Phosphopentomutase.